The primary structure comprises 219 residues: Small ribosomal subunit protein uS5 (219 aa).

One can recognise an S5 DRBM domain in the interval 52 to 115; sequence LDDEVLDINM…DVAKLNLISV (64 aa). Positions 196-219 are disordered; sequence LRNASQSRTPRRAAAKQREQEVSE.

The protein belongs to the universal ribosomal protein uS5 family. Part of the 30S ribosomal subunit. Contacts protein S4.

Functionally, with S4 and S12 plays an important role in translational accuracy. The chain is Small ribosomal subunit protein uS5 from Haloquadratum walsbyi (strain DSM 16790 / HBSQ001).